The following is a 207-amino-acid chain: MSTIIMDLCSYTRLGLSGYLVSRGVKKREINDIETVDELAIACGAHQPSVVFINEDCFIHTPSDSQQIKQIINQHPDTLFIVFMAIANVHFDEYLLVRKNLLISSKSIKPDSLDTLLGDILKKESGISGTINLPTLSLSRTESSMLRMWMEGQGTIQISDRMNIKAKTVSSHKGNIKRKIKTHNKQVIYHVVRLTDNVTNGIFANMR.

Residues 131–196 (INLPTLSLSR…VIYHVVRLTD (66 aa)) enclose the HTH luxR-type domain. The H-T-H motif DNA-binding region spans 155-174 (TIQISDRMNIKAKTVSSHKG).

The protein belongs to the RcsA family. Interacts with RcsB.

Functionally, component of the Rcs signaling system, which controls transcription of numerous genes. Binds, with RcsB, to the RcsAB box to regulate expression of genes. The sequence is that of Transcriptional regulatory protein RcsA from Salmonella typhi.